Here is a 1501-residue protein sequence, read N- to C-terminus: 1-phosphatidylinositol 4,5-bisphosphate phosphodiesterase eta-2 (1501 aa).

The tract at residues 28–47 (RGFSGLQGGRRRGRGEKGIP) is disordered. The tract at residues 75 to 229 (MPGPQPSAAS…WVTGLRYLMA (155 aa)) is necessary for plasma membrane localization. The PH domain occupies 121 to 229 (SAMQEGTQMV…WVTGLRYLMA (109 aa)). EF-hand domains follow at residues 243 to 278 (TRDQ…LNVN) and 279 to 315 (LPRQ…MSTR). Positions 256, 258, 260, 262, and 267 each coordinate Ca(2+). A PI-PLC X-box domain is found at 400 to 545 (QDMTQPLSHY…LKGKILVKGK (146 aa)). His-415 is an active-site residue. Positions 416, 445, and 447 each coordinate Ca(2+). The active site involves His-459. Residue Glu-494 coordinates Ca(2+). Residues Lys-543 and Lys-545 each contribute to the substrate site. Disordered regions lie at residues 551-570 (ISED…DEME) and 609-700 (DPND…QKKT). The span at 553–570 (EDAEEGEVSDEDSADEME) shows a compositional bias: acidic residues. A phosphoserine mark is found at Ser-561 and Ser-565. Residues 626-638 (RKAEAKKGQSKVE) show a composition bias toward basic and acidic residues. A compositionally biased stretch (basic residues) spans 662 to 673 (SKRKKKGSKIKK). A phosphoserine mark is found at Ser-676 and Ser-686. The PI-PLC Y-box domain maps to 707 to 821 (LSDLVKYTKS…GYVLKPQCMC (115 aa)). Residues Ser-734 and Arg-761 each contribute to the substrate site. The C2 domain maps to 821 to 950 (CQGVFNPNSE…PGYRHVYLEG (130 aa)). Ca(2+)-binding residues include Ile-865, Asp-867, Asp-891, Asp-920, His-921, and Asp-922. Disordered regions lie at residues 986 to 1073 (GSLD…RLFP), 1089 to 1238 (EEPA…SSND), 1273 to 1305 (SAAR…DELQ), and 1398 to 1469 (GDIT…GACS). Residues 1089-1107 (EEPALGPGLPLQAAAPTGP) are compositionally biased toward low complexity. Basic and acidic residues-rich tracts occupy residues 1142–1151 (GGRENEEPPL) and 1215–1227 (LWQR…HRDS). Over residues 1421 to 1439 (RRSSSRSQSRVRAIASRAR) the composition is skewed to low complexity. The span at 1440–1463 (QAQERQQRLRGQDSRGPPEEERGT) shows a compositional bias: basic and acidic residues.

Ca(2+) serves as cofactor. Specifically detected in the brain, with higher level in cerebral cortex, olfactory bulb and hippocampus (at protein level). Expressed in the pyramidal cells of the hippocampus, but also in eye and lung.

The protein localises to the cytoplasm. It is found in the cell membrane. The enzyme catalyses a 1,2-diacyl-sn-glycero-3-phospho-(1D-myo-inositol-4,5-bisphosphate) + H2O = 1D-myo-inositol 1,4,5-trisphosphate + a 1,2-diacyl-sn-glycerol + H(+). Activity is stimulated by GNB1:GNG2. Its function is as follows. The production of the second messenger molecules diacylglycerol (DAG) and inositol 1,4,5-trisphosphate (IP3) is mediated by activated phosphatidylinositol-specific phospholipase C enzymes. This phospholipase activity is very sensitive to calcium. May be important for formation and maintenance of the neuronal network in the postnatal brain. This Mus musculus (Mouse) protein is 1-phosphatidylinositol 4,5-bisphosphate phosphodiesterase eta-2.